We begin with the raw amino-acid sequence, 341 residues long: Mitochondrial glutathione transporter SLC25A40 (341 aa).

Solcar repeat units lie at residues 14–132, 140–224, and 234–328; these read ITPS…LRDI, RAEI…VKQS, and PTFA…GKSF. The next 6 helical transmembrane spans lie at 20-40, 104-124, 143-163, 200-221, 236-256, and 299-319; these read MIAS…LDVV, LWSG…IYFT, IASL…ISPL, WGPT…YELV, FAIS…VTLP, and GLFA…AIMI.

The protein belongs to the mitochondrial carrier (TC 2.A.29) family.

The protein localises to the mitochondrion inner membrane. The enzyme catalyses glutathione(in) = glutathione(out). Probable mitochondrial transporter required for glutathione import into mitochondria. Glutathione, which plays key roles in oxidative metabolism, is produced exclusively in the cytosol and is imported in many organelles. Mitochondrial glutathione is required for the activity and stability of proteins containing iron-sulfur clusters. The chain is Mitochondrial glutathione transporter SLC25A40 from Xenopus tropicalis (Western clawed frog).